A 451-amino-acid chain; its full sequence is uncharacterized protein (451 aa).

An N-terminal signal peptide occupies residues 1–22 (MKLKLIFSLFLVLVFCSLFVFG). N-linked (GlcNAc...) asparagine glycosylation is found at asparagine 25, asparagine 45, asparagine 209, asparagine 326, and asparagine 402.

It is found in the secreted. This is an uncharacterized protein from Dictyostelium discoideum (Social amoeba).